Reading from the N-terminus, the 310-residue chain is ADP-L-glycero-D-manno-heptose-6-epimerase (310 aa).

NADP(+) is bound by residues phenylalanine 10 to isoleucine 11, aspartate 31 to asparagine 32, lysine 38, lysine 53, glutamate 75 to serine 79, and asparagine 92. Tyrosine 140 (proton acceptor) is an active-site residue. Lysine 144 contributes to the NADP(+) binding site. Asparagine 169 is a substrate binding site. Residues valine 170 and lysine 178 each contribute to the NADP(+) site. Catalysis depends on lysine 178, which acts as the Proton acceptor. Residues serine 180, histidine 187, phenylalanine 201–serine 204, arginine 209, and tyrosine 272 contribute to the substrate site.

This sequence belongs to the NAD(P)-dependent epimerase/dehydratase family. HldD subfamily. Homopentamer. It depends on NADP(+) as a cofactor.

The catalysed reaction is ADP-D-glycero-beta-D-manno-heptose = ADP-L-glycero-beta-D-manno-heptose. Its pathway is nucleotide-sugar biosynthesis; ADP-L-glycero-beta-D-manno-heptose biosynthesis; ADP-L-glycero-beta-D-manno-heptose from D-glycero-beta-D-manno-heptose 7-phosphate: step 4/4. Its function is as follows. Catalyzes the interconversion between ADP-D-glycero-beta-D-manno-heptose and ADP-L-glycero-beta-D-manno-heptose via an epimerization at carbon 6 of the heptose. This Pectobacterium atrosepticum (strain SCRI 1043 / ATCC BAA-672) (Erwinia carotovora subsp. atroseptica) protein is ADP-L-glycero-D-manno-heptose-6-epimerase.